The sequence spans 415 residues: Histidine--tRNA ligase (415 aa).

Belongs to the class-II aminoacyl-tRNA synthetase family. Homodimer.

Its subcellular location is the cytoplasm. The enzyme catalyses tRNA(His) + L-histidine + ATP = L-histidyl-tRNA(His) + AMP + diphosphate + H(+). This is Histidine--tRNA ligase from Idiomarina loihiensis (strain ATCC BAA-735 / DSM 15497 / L2-TR).